A 195-amino-acid polypeptide reads, in one-letter code: ATP-dependent Clp protease proteolytic subunit (195 aa).

Ser98 serves as the catalytic Nucleophile. Residue His123 is part of the active site.

The protein belongs to the peptidase S14 family. In terms of assembly, fourteen ClpP subunits assemble into 2 heptameric rings which stack back to back to give a disk-like structure with a central cavity, resembling the structure of eukaryotic proteasomes.

Its subcellular location is the cytoplasm. The enzyme catalyses Hydrolysis of proteins to small peptides in the presence of ATP and magnesium. alpha-casein is the usual test substrate. In the absence of ATP, only oligopeptides shorter than five residues are hydrolyzed (such as succinyl-Leu-Tyr-|-NHMec, and Leu-Tyr-Leu-|-Tyr-Trp, in which cleavage of the -Tyr-|-Leu- and -Tyr-|-Trp bonds also occurs).. Cleaves peptides in various proteins in a process that requires ATP hydrolysis. Has a chymotrypsin-like activity. Plays a major role in the degradation of misfolded proteins. The protein is ATP-dependent Clp protease proteolytic subunit of Helicobacter pylori (strain G27).